A 1663-amino-acid polypeptide reads, in one-letter code: Glutamine-rich protein 2 (1663 aa).

Disordered regions lie at residues 80–239 (HGGF…LVPA), 423–481 (GLVQ…GTGQ), 575–615 (AQPR…QHGL), 880–925 (TYQQ…QVYP), and 948–984 (RGPG…APGQ). 2 stretches are compositionally biased toward polar residues: residues 84–103 (TSLT…QPSI) and 131–150 (GVSS…QQQP). A compositionally biased stretch (basic and acidic residues) spans 171-182 (SDSDRHRSREKL). The span at 206-217 (QPSSVPASQSQV) shows a compositional bias: low complexity. Basic and acidic residues predominate over residues 958–975 (HGQEGLDPNRTRASDRHG). Coiled-coil stretches lie at residues 1085–1160 (KTVK…MENS) and 1286–1325 (EDHR…KADK). The segment covering 1609 to 1619 (TRLPGILRKDS) has biased composition (basic and acidic residues). Residues 1609 to 1663 (TRLPGILRKDSSGTSKRKSQQPRPHVHRPPSLSSNGQLPSRPQSAQISAGNTSER) are disordered. Positions 1623-1636 (SKRKSQQPRPHVHR) are enriched in basic residues. Residues 1639–1663 (SLSSNGQLPSRPQSAQISAGNTSER) are compositionally biased toward polar residues.

Interacts with AKAP3, ODF2 and TSSK4. Interacts with AKAP4. Expressed in the sperm.

Its subcellular location is the nucleus membrane. The protein resides in the nucleus. The protein localises to the cytoplasm. It is found in the cell projection. It localises to the cilium. Its subcellular location is the flagellum. Functionally, has an essential role in the formation of sperm flagella and flagellar structure maintainance. It acts as a suppressor of ubiquitination and degradation of proteins involved in flagellar development and motility. The chain is Glutamine-rich protein 2 (QRICH2) from Homo sapiens (Human).